Reading from the N-terminus, the 34-residue chain is Phospholipase A2 (34 aa).

H18 is a catalytic residue. D19 provides a ligand contact to Ca(2+).

Belongs to the phospholipase A2 family. Group I subfamily. D49 sub-subfamily. Requires Ca(2+) as cofactor. Contains 7 disulfide bonds. Expressed by the venom gland.

The protein localises to the secreted. The enzyme catalyses a 1,2-diacyl-sn-glycero-3-phosphocholine + H2O = a 1-acyl-sn-glycero-3-phosphocholine + a fatty acid + H(+). Snake venom phospholipase A2 (PLA2) that strongly inhibits platelet aggregation and has a strong anticoagulant activity. PLA2 catalyzes the calcium-dependent hydrolysis of the 2-acyl groups in 3-sn-phosphoglycerides. The sequence is that of Phospholipase A2 from Pseudechis papuanus (Papuan black snake).